Here is a 270-residue protein sequence, read N- to C-terminus: Interleukin-33 (270 aa).

Residues methionine 1–threonine 65 form a homeodomain-like HTH domain region. Positions methionine 1–phenylalanine 94 are excised as a propeptide. The interval threonine 64–serine 111 is interaction with RELA.

Belongs to the IL-1 family. Highly divergent. As to quaternary structure, forms a 1:1:1 heterotrimeric complex with its primary high-affinity receptor IL1RL1 and the coreceptor IL1RAP. Interacts with cargo receptor TMED10; the interaction mediates the translocation from the cytoplasm into the ERGIC (endoplasmic reticulum-Golgi intermediate compartment) and thereby secretion. (Microbial infection) Interacts (in reduced form) with H.polygyrus ARI. Post-translationally, the full-length protein can be released from cells and is able to signal via the IL1RL1/ST2 receptor. However, proteolytic processing by CELA1, CSTG/cathepsin G and ELANE/neutrophil elastase produces C-terminal peptides that are more active than the unprocessed full length protein. May also be proteolytically processed by calpains. Proteolytic cleavage mediated by apoptotic caspases including CASP3 and CASP7 results in IL33 inactivation. In vitro proteolytic cleavage by CASP1 was reported but could not be confirmed in vivo suggesting that IL33 is probably not a direct substrate for that caspase. In terms of tissue distribution, expressed at high level in high endothelial venules found in tonsils, Peyer patches and mesenteric lymph nodes. Almost undetectable in placenta.

It is found in the nucleus. The protein resides in the chromosome. It localises to the cytoplasm. Its subcellular location is the cytoplasmic vesicle. The protein localises to the secretory vesicle. It is found in the secreted. Its function is as follows. Cytokine that binds to and signals through the IL1RL1/ST2 receptor which in turn activates NF-kappa-B and MAPK signaling pathways in target cells. Involved in the maturation of Th2 cells inducing the secretion of T-helper type 2-associated cytokines. Also involved in activation of mast cells, basophils, eosinophils and natural killer cells. Acts as an enhancer of polarization of alternatively activated macrophages. Acts as a chemoattractant for Th2 cells, and may function as an 'alarmin', that amplifies immune responses during tissue injury. Induces rapid UCP2-dependent mitochondrial rewiring that attenuates the generation of reactive oxygen species and preserves the integrity of Krebs cycle required for persistent production of itaconate and subsequent GATA3-dependent differentiation of inflammation-resolving alternatively activated macrophages. In quiescent endothelia the uncleaved form is constitutively and abundantly expressed, and acts as a chromatin-associated nuclear factor with transcriptional repressor properties, it may sequester nuclear NF-kappaB/RELA, lowering expression of its targets. This form is rapidely lost upon angiogenic or pro-inflammatory activation. The sequence is that of Interleukin-33 from Homo sapiens (Human).